The primary structure comprises 134 residues: Small ribosomal subunit protein bS6 (134 aa).

Belongs to the bacterial ribosomal protein bS6 family.

Binds together with bS18 to 16S ribosomal RNA. In Chlorobium phaeobacteroides (strain BS1), this protein is Small ribosomal subunit protein bS6.